We begin with the raw amino-acid sequence, 25 residues long: Gastrin-releasing peptide (25 aa).

Position 25 is a methionine amide (methionine 25).

This sequence belongs to the bombesin/neuromedin-B/ranatensin family.

The protein resides in the secreted. Its subcellular location is the cytoplasmic vesicle. It localises to the secretory vesicle lumen. Its function is as follows. Stimulates the release of gastrin and other gastrointestinal hormones. The polypeptide is Gastrin-releasing peptide (grp) (Scyliorhinus canicula (Small-spotted catshark)).